The sequence spans 239 residues: Norbelladine 4'-O-methyltransferase 4 (239 aa).

S-adenosyl-L-methionine-binding positions include Val-55, Glu-77, 79–80 (GV), Ser-85, Asp-103, and Ala-132. Asp-155 lines the a divalent metal cation pocket. S-adenosyl-L-methionine is bound at residue Asp-157. The a divalent metal cation site is built by Asp-181 and Asn-182.

Belongs to the class I-like SAM-binding methyltransferase superfamily. Cation-dependent O-methyltransferase family. Mg(2+) is required as a cofactor.

The enzyme catalyses norbelladine + S-adenosyl-L-methionine = 4'-O-methylnorbelladine + S-adenosyl-L-homocysteine + H(+). It functions in the pathway alkaloid biosynthesis. In terms of biological role, 4'-O-methyltransferase converting norbelladine to 4'-O-methylnorbelladine. 4'-O-methylnorbelladine is a precursor to all Amaryllidaceae alkaloids such as galanthamine, lycorine and haemanthamine, and including haemanthamine- and crinamine-type alkaloids, promising anticancer agents. This chain is Norbelladine 4'-O-methyltransferase 4, found in Narcissus aff. pseudonarcissus MK-2014 (Daffodil).